The primary structure comprises 176 residues: Superoxide oxidase CybB (176 aa).

The Cytoplasmic segment spans residues 1-7; it reads MENKYSR. A helical membrane pass occupies residues 8 to 29; the sequence is LQISIHWLVFLLVIAAYCAMEF. His-13 contacts heme b. Topologically, residues 30–39 are periplasmic; it reads RGFFPRSDRP. The chain crosses the membrane as a helical span at residues 40-64; sequence LINMIHVSCGISILVLMVVRLLLRL. Residue His-45 participates in heme b binding. The Cytoplasmic portion of the chain corresponds to 65-77; it reads KYPTPPIIPKPKP. The chain crosses the membrane as a helical span at residues 78-103; sequence MMTGLAHLGHLVIYLLFIALPVIGLV. At 104 to 135 the chain is on the periplasmic side; sequence MMYNRGNPWFAFGLTMPYASEANFERVDSLKS. Residues 136-158 form a helical membrane-spanning segment; the sequence is WHETLANLGYFVIGLHAAAALAH. Heme b contacts are provided by His-137 and His-151. At 159-176 the chain is on the cytoplasmic side; the sequence is HYFWKDNTLLRMMPRKRS.

This sequence belongs to the cytochrome b561 family. Monomer. The cofactor is heme b.

It localises to the cell inner membrane. It carries out the reaction a ubiquinol + 2 O2 = 2 superoxide + a ubiquinone + 2 H(+). The enzyme catalyses a menaquinol + 2 O2 = 2 superoxide + a menaquinone + 2 H(+). Quinone binding to the enzyme accelerates the reaction with superoxide. Functionally, B-type di-heme cytochrome. Catalyzes the oxidation of superoxide to molecular oxygen and transfers the extracted electrons to ubiquinone through the two hemes. Can also use menaquinone. The enzyme may be responsible for the detoxification of the superoxide anion produced in the membrane or at its surface. However, it can also efficiently catalyze the formation of superoxide from ubiquinol under physiological conditions. The polypeptide is Superoxide oxidase CybB (Escherichia coli (strain K12)).